The chain runs to 101 residues: NAD(P)H-quinone oxidoreductase subunit 4L, chloroplastic (101 aa).

A run of 3 helical transmembrane segments spans residues 2–22, 32–52, and 61–81; these read ILEHVLVLSAYLFLIGLYGLI, MCLELILNAVNMNLVTFSDFF, and IFCIFVIAIAAAEAAIGLAIV.

The protein belongs to the complex I subunit 4L family. In terms of assembly, NDH is composed of at least 16 different subunits, 5 of which are encoded in the nucleus.

It localises to the plastid. The protein localises to the chloroplast thylakoid membrane. It carries out the reaction a plastoquinone + NADH + (n+1) H(+)(in) = a plastoquinol + NAD(+) + n H(+)(out). The catalysed reaction is a plastoquinone + NADPH + (n+1) H(+)(in) = a plastoquinol + NADP(+) + n H(+)(out). NDH shuttles electrons from NAD(P)H:plastoquinone, via FMN and iron-sulfur (Fe-S) centers, to quinones in the photosynthetic chain and possibly in a chloroplast respiratory chain. The immediate electron acceptor for the enzyme in this species is believed to be plastoquinone. Couples the redox reaction to proton translocation, and thus conserves the redox energy in a proton gradient. This chain is NAD(P)H-quinone oxidoreductase subunit 4L, chloroplastic, found in Draba nemorosa (Woodland whitlowgrass).